A 449-amino-acid polypeptide reads, in one-letter code: Delta(8)-fatty-acid desaturase 2 (449 aa).

One can recognise a Cytochrome b5 heme-binding domain in the interval 7–91 (KRYVTSEDLK…VRDHHVSDVS (85 aa)). Residues histidine 42 and histidine 65 each contribute to the heme site. 2 helical membrane passes run 113–133 (VTLY…YGVL) and 138–158 (IWAH…SAYV). The Histidine box-1 motif lies at 160 to 164 (HDSGH). The chain crosses the membrane as a helical span at residues 176-196 (LIQLLSGNCLTGISIAWWKWT). The Histidine box-2 signature appears at 197-201 (HNAHH). 3 helical membrane-spanning segments follow: residues 255 to 275 (FYPV…LLLF), 284 to 304 (ALNI…VSFL), and 311 to 331 (FIFV…FCLN). The Histidine box-3 motif lies at 374 to 378 (QLEHH).

The protein belongs to the fatty acid desaturase type 1 family. It depends on Fe cation as a cofactor. Highly expressed in flowers and siliques. Expressed at low levels in roots, leaves and stems.

It localises to the endoplasmic reticulum membrane. It carries out the reaction an N-acyl-(4R)-4-hydroxysphinganine + 2 Fe(II)-[cytochrome b5] + O2 + 2 H(+) = a (4R,8E)-4-hydroxysphingenine ceramide + 2 Fe(III)-[cytochrome b5] + 2 H2O. It catalyses the reaction an N-acyl-(4R)-4-hydroxysphinganine + 2 Fe(II)-[cytochrome b5] + O2 + 2 H(+) = a (4R,8Z)-4-hydroxysphing-8-enine ceramide + 2 Fe(III)-[cytochrome b5] + 2 H2O. Its function is as follows. Plays a major role as delta(8)-fatty-acid desaturase which introduces a double bond at the 8-position in the long-chain base (LCB) of ceramides with or without a hydroxy group at the 4-position. The enzyme produces both the 8E and 8Z isomers (in a 4:1 ratio). This structural modification contributes to the quantitative partitioning of ceramides between the two major sphingolipid classes, glucosylceramides and glycosylinositolphosphoryl ceramides. Sphingolipids are important membrane components involved in environmental stress responses, such as resistance to chilling, and act as cell signaling molecules. The sequence is that of Delta(8)-fatty-acid desaturase 2 (SLD2) from Arabidopsis thaliana (Mouse-ear cress).